Consider the following 400-residue polypeptide: Acetate kinase (400 aa).

Asn-7 lines the Mg(2+) pocket. ATP is bound at residue Lys-14. Residue Arg-92 coordinates substrate. Asp-149 (proton donor/acceptor) is an active-site residue. ATP is bound by residues His-209–Gly-213, Asp-283–Arg-285, and Gly-331–Asn-335. Glu-385 provides a ligand contact to Mg(2+).

Belongs to the acetokinase family. In terms of assembly, homodimer. The cofactor is Mg(2+). Mn(2+) serves as cofactor.

It is found in the cytoplasm. The enzyme catalyses acetate + ATP = acetyl phosphate + ADP. It functions in the pathway metabolic intermediate biosynthesis; acetyl-CoA biosynthesis; acetyl-CoA from acetate: step 1/2. In terms of biological role, catalyzes the formation of acetyl phosphate from acetate and ATP. Can also catalyze the reverse reaction. The chain is Acetate kinase from Helicobacter acinonychis (strain Sheeba).